The following is a 514-amino-acid chain: Pantetheinase (514 aa).

The first 22 residues, 1 to 22 (MITSRLLVYVAVLVLCVIKVSS), serve as a signal peptide directing secretion. An N-linked (GlcNAc...) asparagine glycan is attached at Asn39. A CN hydrolase domain is found at 40–307 (ATLVPVSHEE…GKLLLSQLDS (268 aa)). Glu80 serves as the catalytic Proton acceptor. N-linked (GlcNAc...) asparagine glycans are attached at residues Asn87 and Asn147. The active-site Proton donor is the Lys179. Cys212 acts as the Nucleophile in catalysis. Residues Asn316 and Asn354 are each glycosylated (N-linked (GlcNAc...) asparagine). Asp492 carries the GPI-anchor amidated aspartate lipid modification. A propeptide spans 493–514 (PRSQVPGVMLLVIIPIVCSLSW) (removed in mature form).

The protein belongs to the carbon-nitrogen hydrolase superfamily. BTD/VNN family. As to quaternary structure, monomer.

It is found in the cell membrane. It carries out the reaction (R)-pantetheine + H2O = cysteamine + (R)-pantothenate. In terms of biological role, amidohydrolase that hydrolyzes specifically one of the carboamide linkages in D-pantetheine thus recycling pantothenic acid (vitamin B5) and releasing cysteamine. This chain is Pantetheinase (VNN1), found in Canis lupus familiaris (Dog).